The following is a 219-amino-acid chain: Cytidylate kinase (219 aa).

ATP is bound at residue 21-29; it reads GPAASGKGT.

Belongs to the cytidylate kinase family. Type 1 subfamily.

Its subcellular location is the cytoplasm. It catalyses the reaction CMP + ATP = CDP + ADP. The enzyme catalyses dCMP + ATP = dCDP + ADP. The sequence is that of Cytidylate kinase from Rickettsia prowazekii (strain Madrid E).